The following is a 591-amino-acid chain: Transcriptional regulator PUL4 (591 aa).

The segment at residues 3–29 (CLECKKRKQKCDGQKPCRRCTKLNVKC) is a DNA-binding region (zn(2)-C6 fungal-type).

The protein localises to the nucleus. In terms of biological role, transcription factor involved in regulation of the PUL gene cluster that mediates the formation of pulcherrimin, a red iron-containing pigment composed of two cyclized and modified leucine molecules that acts as a siderophore, a chelator that binds iron outside the cell for subsequent uptake. The protein is Transcriptional regulator PUL4 of Kluyveromyces lactis (strain ATCC 8585 / CBS 2359 / DSM 70799 / NBRC 1267 / NRRL Y-1140 / WM37) (Yeast).